The sequence spans 289 residues: Ribosomal RNA small subunit methyltransferase A (289 aa).

Residues Asn-21, Leu-23, Gly-48, Glu-69, Asp-94, and Asn-120 each contribute to the S-adenosyl-L-methionine site.

This sequence belongs to the class I-like SAM-binding methyltransferase superfamily. rRNA adenine N(6)-methyltransferase family. RsmA subfamily.

It is found in the cytoplasm. The enzyme catalyses adenosine(1518)/adenosine(1519) in 16S rRNA + 4 S-adenosyl-L-methionine = N(6)-dimethyladenosine(1518)/N(6)-dimethyladenosine(1519) in 16S rRNA + 4 S-adenosyl-L-homocysteine + 4 H(+). Specifically dimethylates two adjacent adenosines (A1518 and A1519) in the loop of a conserved hairpin near the 3'-end of 16S rRNA in the 30S particle. May play a critical role in biogenesis of 30S subunits. This chain is Ribosomal RNA small subunit methyltransferase A, found in Actinobacillus pleuropneumoniae serotype 5b (strain L20).